The following is a 773-amino-acid chain: DNA polymerase (773 aa).

2 cysteine pairs are disulfide-bonded: C428–C442 and C506–C509.

It belongs to the DNA polymerase type-B family.

It catalyses the reaction DNA(n) + a 2'-deoxyribonucleoside 5'-triphosphate = DNA(n+1) + diphosphate. Its function is as follows. In addition to polymerase activity, this DNA polymerase exhibits 3' to 5' exonuclease activity. This chain is DNA polymerase (pol), found in Thermococcus gorgonarius.